The chain runs to 251 residues: Protein phosphatase 1 regulatory subunit 35 (251 aa).

Disordered regions lie at residues 58–99 (LITV…QQTH) and 180–235 (PALA…VPRP). The segment covering 76-99 (PNKDEHGVETDREQSRECDGQQTH) has biased composition (basic and acidic residues).

The protein belongs to the PPP1R35 family.

It localises to the cytoplasm. The protein localises to the cytoskeleton. Its subcellular location is the microtubule organizing center. The protein resides in the centrosome. It is found in the centriole. During centriole duplication, may play a role in the centriole elongation by promoting the recruitment of the microtubule-binding elongation machinery, leading to the centriole to centrosome conversion. In addition may play a role in the primary cilia assembly. The protein is Protein phosphatase 1 regulatory subunit 35 of Danio rerio (Zebrafish).